We begin with the raw amino-acid sequence, 95 residues long: Aspartyl/glutamyl-tRNA(Asn/Gln) amidotransferase subunit C (95 aa).

Belongs to the GatC family. Heterotrimer of A, B and C subunits.

It carries out the reaction L-glutamyl-tRNA(Gln) + L-glutamine + ATP + H2O = L-glutaminyl-tRNA(Gln) + L-glutamate + ADP + phosphate + H(+). It catalyses the reaction L-aspartyl-tRNA(Asn) + L-glutamine + ATP + H2O = L-asparaginyl-tRNA(Asn) + L-glutamate + ADP + phosphate + 2 H(+). Allows the formation of correctly charged Asn-tRNA(Asn) or Gln-tRNA(Gln) through the transamidation of misacylated Asp-tRNA(Asn) or Glu-tRNA(Gln) in organisms which lack either or both of asparaginyl-tRNA or glutaminyl-tRNA synthetases. The reaction takes place in the presence of glutamine and ATP through an activated phospho-Asp-tRNA(Asn) or phospho-Glu-tRNA(Gln). The polypeptide is Aspartyl/glutamyl-tRNA(Asn/Gln) amidotransferase subunit C (Methylobacillus flagellatus (strain ATCC 51484 / DSM 6875 / VKM B-1610 / KT)).